A 194-amino-acid chain; its full sequence is uncharacterized protein (194 aa).

The N-terminal stretch at 1 to 20 is a signal peptide; the sequence is MLYKFTVLLLIYSYLRNLQA. Asn31, Asn72, Asn133, and Asn157 each carry an N-linked (GlcNAc...) asparagine; by host glycan.

This is an uncharacterized protein from Ostreid herpesvirus 1 (isolate France) (OsHV-1).